Here is a 145-residue protein sequence, read N- to C-terminus: 3-dehydroquinate dehydratase (145 aa).

Catalysis depends on Y24, which acts as the Proton acceptor. Substrate is bound by residues N75, H81, and D88. H101 (proton donor) is an active-site residue. Substrate contacts are provided by residues 102-103 (IS) and R112.

The protein belongs to the type-II 3-dehydroquinase family. Homododecamer.

The catalysed reaction is 3-dehydroquinate = 3-dehydroshikimate + H2O. Its pathway is metabolic intermediate biosynthesis; chorismate biosynthesis; chorismate from D-erythrose 4-phosphate and phosphoenolpyruvate: step 3/7. Its function is as follows. Catalyzes a trans-dehydration via an enolate intermediate. The chain is 3-dehydroquinate dehydratase from Rhizobium johnstonii (strain DSM 114642 / LMG 32736 / 3841) (Rhizobium leguminosarum bv. viciae).